The chain runs to 278 residues: NAD-capped RNA hydrolase NudC (278 aa).

Arginine 84 is a binding site for substrate. Positions 114 and 117 each coordinate Zn(2+). Glutamate 127 contributes to the substrate binding site. The Zn(2+) site is built by cysteine 132 and cysteine 135. Tyrosine 140 contributes to the substrate binding site. The 125-residue stretch at 141 to 265 folds into the Nudix hydrolase domain; the sequence is PRLSPSMIVL…IARHLIDLYL (125 aa). Residues alanine 174, glutamate 190, and glutamate 194 each contribute to the a divalent metal cation site. Residues 175-196 carry the Nudix box motif; the sequence is GFVEAGESVEQCVVREVREEVG. 208–215 serves as a coordination point for substrate; that stretch reads QNWPFPHS. Glutamate 235 is a binding site for a divalent metal cation. Alanine 257 serves as a coordination point for substrate.

It belongs to the Nudix hydrolase family. NudC subfamily. As to quaternary structure, homodimer. The cofactor is Mg(2+). Requires Mn(2+) as cofactor. Zn(2+) serves as cofactor.

The catalysed reaction is a 5'-end NAD(+)-phospho-ribonucleoside in mRNA + H2O = a 5'-end phospho-adenosine-phospho-ribonucleoside in mRNA + beta-nicotinamide D-ribonucleotide + 2 H(+). It catalyses the reaction NAD(+) + H2O = beta-nicotinamide D-ribonucleotide + AMP + 2 H(+). The enzyme catalyses NADH + H2O = reduced beta-nicotinamide D-ribonucleotide + AMP + 2 H(+). Functionally, mRNA decapping enzyme that specifically removes the nicotinamide adenine dinucleotide (NAD) cap from a subset of mRNAs by hydrolyzing the diphosphate linkage to produce nicotinamide mononucleotide (NMN) and 5' monophosphate mRNA. The NAD-cap is present at the 5'-end of some mRNAs and stabilizes RNA against 5'-processing. Has preference for mRNAs with a 5'-end purine. Catalyzes the hydrolysis of a broad range of dinucleotide pyrophosphates. This Pseudomonas aeruginosa (strain ATCC 15692 / DSM 22644 / CIP 104116 / JCM 14847 / LMG 12228 / 1C / PRS 101 / PAO1) protein is NAD-capped RNA hydrolase NudC.